The primary structure comprises 612 residues: RNA-binding protein MRN1 (612 aa).

The span at 1–28 (MVVSYNNNNNNNNNNNNNNISNNNNNNN) shows a compositional bias: low complexity. Disordered regions lie at residues 1 to 57 (MVVS…TYAS) and 105 to 125 (PTQFQTKQRNDSQQQRFSQEQ). Composition is skewed to polar residues over residues 42-57 (YQQSSSSGPYQETYAS) and 115-125 (DSQQQRFSQEQ). RRM domains follow at residues 201-274 (RTVY…WGKP), 292-379 (RNVY…KTQQ), 431-504 (RTVY…WGKH), and 522-602 (RNVY…FGKD).

It is found in the cytoplasm. In terms of biological role, RNA-binding protein that binds specific categories of mRNAs, including those that contain upstream open reading frames (uORFs) and internal ribosome entry sites (IRES). Probably involved in translational regulation. In Saccharomyces cerevisiae (strain ATCC 204508 / S288c) (Baker's yeast), this protein is RNA-binding protein MRN1 (MRN1).